A 247-amino-acid polypeptide reads, in one-letter code: tRNA uridine(34) hydroxylase (247 aa).

In terms of domain architecture, Rhodanese spans 124-218 (TKQNVIVIDT…YLEDTQNKNN (95 aa)). The active-site Cysteine persulfide intermediate is Cys178.

It belongs to the TrhO family.

The enzyme catalyses uridine(34) in tRNA + AH2 + O2 = 5-hydroxyuridine(34) in tRNA + A + H2O. Functionally, catalyzes oxygen-dependent 5-hydroxyuridine (ho5U) modification at position 34 in tRNAs. This is tRNA uridine(34) hydroxylase from Rickettsia akari (strain Hartford).